Here is a 357-residue protein sequence, read N- to C-terminus: Alanine racemase (357 aa).

K33 functions as the Proton acceptor; specific for D-alanine in the catalytic mechanism. The residue at position 33 (K33) is an N6-(pyridoxal phosphate)lysine. R129 provides a ligand contact to substrate. Y253 (proton acceptor; specific for L-alanine) is an active-site residue. M301 is a substrate binding site.

Belongs to the alanine racemase family. Pyridoxal 5'-phosphate serves as cofactor.

It catalyses the reaction L-alanine = D-alanine. Its pathway is amino-acid biosynthesis; D-alanine biosynthesis; D-alanine from L-alanine: step 1/1. Functionally, catalyzes the interconversion of L-alanine and D-alanine. May also act on other amino acids. This is Alanine racemase (alr) from Pseudomonas syringae pv. syringae (strain B728a).